The sequence spans 244 residues: tRNA pseudouridine synthase A (244 aa).

Asp52 (nucleophile) is an active-site residue. Tyr110 is a binding site for substrate.

The protein belongs to the tRNA pseudouridine synthase TruA family. In terms of assembly, homodimer.

The catalysed reaction is uridine(38/39/40) in tRNA = pseudouridine(38/39/40) in tRNA. Functionally, formation of pseudouridine at positions 38, 39 and 40 in the anticodon stem and loop of transfer RNAs. The polypeptide is tRNA pseudouridine synthase A (Geobacter sulfurreducens (strain ATCC 51573 / DSM 12127 / PCA)).